A 396-amino-acid polypeptide reads, in one-letter code: Ornithine aminotransferase 2 (396 aa).

Lysine 255 is subject to N6-(pyridoxal phosphate)lysine.

Belongs to the class-III pyridoxal-phosphate-dependent aminotransferase family. OAT subfamily. Requires pyridoxal 5'-phosphate as cofactor.

The protein resides in the cytoplasm. The catalysed reaction is a 2-oxocarboxylate + L-ornithine = L-glutamate 5-semialdehyde + an L-alpha-amino acid. Its pathway is amino-acid biosynthesis; L-proline biosynthesis; L-glutamate 5-semialdehyde from L-ornithine: step 1/1. In terms of biological role, catalyzes the interconversion of ornithine to glutamate semialdehyde. The protein is Ornithine aminotransferase 2 of Staphylococcus aureus (strain COL).